Consider the following 322-residue polypeptide: N-acetyl-gamma-glutamyl-phosphate reductase (322 aa).

Residue Cys-132 is part of the active site.

Belongs to the NAGSA dehydrogenase family. Type 1 subfamily.

It localises to the cytoplasm. The catalysed reaction is N-acetyl-L-glutamate 5-semialdehyde + phosphate + NADP(+) = N-acetyl-L-glutamyl 5-phosphate + NADPH + H(+). The protein operates within amino-acid biosynthesis; L-arginine biosynthesis; N(2)-acetyl-L-ornithine from L-glutamate: step 3/4. Catalyzes the NADPH-dependent reduction of N-acetyl-5-glutamyl phosphate to yield N-acetyl-L-glutamate 5-semialdehyde. The polypeptide is N-acetyl-gamma-glutamyl-phosphate reductase (Bacteroides fragilis (strain ATCC 25285 / DSM 2151 / CCUG 4856 / JCM 11019 / LMG 10263 / NCTC 9343 / Onslow / VPI 2553 / EN-2)).